The sequence spans 656 residues: Macrolide export ATP-binding/permease protein MacB (656 aa).

In terms of domain architecture, ABC transporter spans 6–244 (LEVSACYRSF…VKAQVDMSLA (239 aa)). 42–49 (GASGSGKS) lines the ATP pocket. Transmembrane regions (helical) follow at residues 277–297 (FLTMLGIIIGIASVVSVVALG), 531–551 (LLISAIAVISLVVGGIGVMNI), 586–606 (LVCLCGGALGVALAYLIGVVF), and 621–641 (SIVAAFACSTLIGVLFGFLPA).

It belongs to the ABC transporter superfamily. Macrolide exporter (TC 3.A.1.122) family. In terms of assembly, homodimer. Part of the tripartite efflux system MacAB-TolC, which is composed of an inner membrane transporter, MacB, a periplasmic membrane fusion protein, MacA, and an outer membrane component, TolC. The complex forms a large protein conduit and can translocate molecules across both the inner and outer membranes. Interacts with MacA.

The protein resides in the cell inner membrane. Part of the tripartite efflux system MacAB-TolC. MacB is a non-canonical ABC transporter that contains transmembrane domains (TMD), which form a pore in the inner membrane, and an ATP-binding domain (NBD), which is responsible for energy generation. Confers resistance against macrolides. This Shewanella oneidensis (strain ATCC 700550 / JCM 31522 / CIP 106686 / LMG 19005 / NCIMB 14063 / MR-1) protein is Macrolide export ATP-binding/permease protein MacB.